The sequence spans 166 residues: Large ribosomal subunit protein uL10 (166 aa).

It belongs to the universal ribosomal protein uL10 family. As to quaternary structure, part of the ribosomal stalk of the 50S ribosomal subunit. The N-terminus interacts with L11 and the large rRNA to form the base of the stalk. The C-terminus forms an elongated spine to which L12 dimers bind in a sequential fashion forming a multimeric L10(L12)X complex.

Its function is as follows. Forms part of the ribosomal stalk, playing a central role in the interaction of the ribosome with GTP-bound translation factors. The sequence is that of Large ribosomal subunit protein uL10 from Pseudomonas entomophila (strain L48).